A 477-amino-acid chain; its full sequence is MNFETVIGLEVHVELKTNSKIFSPAPAHFGEDPNANTNIIDWSFPGVLPVMNKGVIDYGIKAALALNMDIHQKMHFDRKNYFYPDNPKAYQISQFDEPIGYNGWIEIELEDGTTKKIRIERAHLEEDAGKNTHGSDGYSYVDLNRQGVPLIEIVSEADMRSPEEAYAYLTALKEIIQYTGISDVKMEEGSMRVDANISIRPYGQEEFGTKTELKNLNSFNFVRKGLAFEEKRQAEILRSGGQIRQETRRYDEATGETLLMRVKEGSADYRYFPEPDLPIFEIEDAWIEQVRSSLPAFPKERRAKYVGDYGLSDYDAKQLTATKAVSDFFEAALAAGGDAKAVSNWLQGEVAQYLNAEGKTISEIELTPENLTEMIALIADGTISSKIAKKVFVHLAKNGGSAKEYVQKAGLIQISDPAQLLPIIQEVFANNEKAINDYKGGNKNAAKSLIGQLMKATKGQANPQVAQKLLNEELEKL.

The protein belongs to the GatB/GatE family. GatB subfamily. As to quaternary structure, heterotrimer of A, B and C subunits.

It catalyses the reaction L-glutamyl-tRNA(Gln) + L-glutamine + ATP + H2O = L-glutaminyl-tRNA(Gln) + L-glutamate + ADP + phosphate + H(+). The catalysed reaction is L-aspartyl-tRNA(Asn) + L-glutamine + ATP + H2O = L-asparaginyl-tRNA(Asn) + L-glutamate + ADP + phosphate + 2 H(+). In terms of biological role, allows the formation of correctly charged Asn-tRNA(Asn) or Gln-tRNA(Gln) through the transamidation of misacylated Asp-tRNA(Asn) or Glu-tRNA(Gln) in organisms which lack either or both of asparaginyl-tRNA or glutaminyl-tRNA synthetases. The reaction takes place in the presence of glutamine and ATP through an activated phospho-Asp-tRNA(Asn) or phospho-Glu-tRNA(Gln). This Streptococcus sanguinis (strain SK36) protein is Aspartyl/glutamyl-tRNA(Asn/Gln) amidotransferase subunit B.